Reading from the N-terminus, the 319-residue chain is Aspartate carbamoyltransferase catalytic subunit (319 aa).

Carbamoyl phosphate-binding residues include arginine 55 and threonine 56. L-aspartate is bound at residue lysine 83. Carbamoyl phosphate-binding residues include arginine 105, histidine 144, and glutamine 147. The L-aspartate site is built by arginine 177 and arginine 231. 2 residues coordinate carbamoyl phosphate: glycine 272 and proline 273.

Belongs to the aspartate/ornithine carbamoyltransferase superfamily. ATCase family. Heterododecamer (2C3:3R2) of six catalytic PyrB chains organized as two trimers (C3), and six regulatory PyrI chains organized as three dimers (R2).

It catalyses the reaction carbamoyl phosphate + L-aspartate = N-carbamoyl-L-aspartate + phosphate + H(+). It participates in pyrimidine metabolism; UMP biosynthesis via de novo pathway; (S)-dihydroorotate from bicarbonate: step 2/3. Catalyzes the condensation of carbamoyl phosphate and aspartate to form carbamoyl aspartate and inorganic phosphate, the committed step in the de novo pyrimidine nucleotide biosynthesis pathway. In Nocardia farcinica (strain IFM 10152), this protein is Aspartate carbamoyltransferase catalytic subunit.